We begin with the raw amino-acid sequence, 196 residues long: Large ribosomal subunit protein bL25 (196 aa).

The protein belongs to the bacterial ribosomal protein bL25 family. CTC subfamily. As to quaternary structure, part of the 50S ribosomal subunit; part of the 5S rRNA/L5/L18/L25 subcomplex. Contacts the 5S rRNA. Binds to the 5S rRNA independently of L5 and L18.

This is one of the proteins that binds to the 5S RNA in the ribosome where it forms part of the central protuberance. The chain is Large ribosomal subunit protein bL25 from Amoebophilus asiaticus (strain 5a2).